The primary structure comprises 367 residues: Endophilin-A2 (367 aa).

The membrane-binding amphipathic helix stretch occupies residues 1-21 (MSVAGLKKQFYKASQLVSEKV). The BAR domain occupies 18–249 (SEKVGGAEGT…LKRRMREASS (232 aa)). Residues 60-87 (PNPASRAKLTMLNTMSKIRGQVKNPGYP) are required for dimerization upon membrane association. Residues 181-250 (EELRQAMEKF…KRRMREASSR (70 aa)) adopt a coiled-coil conformation. Residues 218–254 (LVDAQLDYHRQAVQILDELAEKLKRRMREASSRPRRE) form an interaction with ARC region. The interval 243–293 (RMREASSRPRREYKPKPRETYDFGESDQSNGGFSCTPTPKVSASSSFRSDK) is disordered. Positions 245 to 263 (REASSRPRREYKPKPRETY) are enriched in basic and acidic residues. Polar residues predominate over residues 268 to 289 (SDQSNGGFSCTPTPKVSASSSF). One can recognise an SH3 domain in the interval 305–364 (LDQPCCKALYDFEPENDGELGFKEGDIITLTNQIDENWYEGMINGQSGFFPLNYVEVLVP).

This sequence belongs to the endophilin family. In terms of assembly, interacts with ARC. Interacts with SYNJ1 and DNM1. As to expression, highest level in central region of the theca of developing follicles (at protein level). Expressed at highest level in brain and testis, at high level in kidney, lung and stroma, low level in spleen and adrenal gland (at protein level). Expressed in most tissue with highest levels in small ovarian follicles, brain and testis.

It localises to the cytoplasm. Its subcellular location is the early endosome membrane. The protein resides in the cell projection. It is found in the podosome. Its function is as follows. Implicated in endocytosis. May recruit other proteins to membranes with high curvature. This chain is Endophilin-A2, found in Gallus gallus (Chicken).